Reading from the N-terminus, the 245-residue chain is 1-(5-phosphoribosyl)-5-[(5-phosphoribosylamino)methylideneamino] imidazole-4-carboxamide isomerase (245 aa).

Asp-7 serves as the catalytic Proton acceptor. Catalysis depends on Asp-129, which acts as the Proton donor.

This sequence belongs to the HisA/HisF family.

It is found in the cytoplasm. The enzyme catalyses 1-(5-phospho-beta-D-ribosyl)-5-[(5-phospho-beta-D-ribosylamino)methylideneamino]imidazole-4-carboxamide = 5-[(5-phospho-1-deoxy-D-ribulos-1-ylimino)methylamino]-1-(5-phospho-beta-D-ribosyl)imidazole-4-carboxamide. Its pathway is amino-acid biosynthesis; L-histidine biosynthesis; L-histidine from 5-phospho-alpha-D-ribose 1-diphosphate: step 4/9. The chain is 1-(5-phosphoribosyl)-5-[(5-phosphoribosylamino)methylideneamino] imidazole-4-carboxamide isomerase from Shigella boydii serotype 4 (strain Sb227).